We begin with the raw amino-acid sequence, 416 residues long: Hepatic and glial cell adhesion molecule (416 aa).

The signal sequence occupies residues 1-33; it reads MKRERGALSRASRALRLAPFVYLLLIQTDPLEG. The Ig-like V-type domain maps to 34–142; the sequence is VNITSPVRLI…GEKTINLTVD (109 aa). Residues 34-240 are Extracellular-facing; it reads VNITSPVRLI…VKITVYRRSS (207 aa). N-linked (GlcNAc...) asparagine glycosylation is found at Asn35, Asn138, Asn167, and Asn189. Positions 148 to 234 constitute an Ig-like C2-type domain; it reads PQVLVASTTV…QGRSLPVKIT (87 aa). Cys168 and Cys217 are joined by a disulfide. A helical membrane pass occupies residues 241 to 261; sequence LYIILSTGGIFLLVTLVTVCA. Residues 262-416 lie on the Cytoplasmic side of the membrane; it reads CWKPSKRKQK…DEAGPVEISA (155 aa). Positions 273–416 are disordered; sequence LEKQNSLEYM…DEAGPVEISA (144 aa). Ser278 is subject to Phosphoserine. Positions 285–306 are enriched in basic and acidic residues; it reads NDDRLKPEADTLPRSGEQERKN. Residues Ser350 and Ser377 each carry the phosphoserine modification. Low complexity predominate over residues 383 to 398; the sequence is SSPGRSRSASRTLRTA.

Homodimer. Dimer formation occurs predominantly through cis interactions on the cell surface. Part of a complex containing MLC1, TRPV4, AQP4 and ATP1B1. Interacts with CLCN2. N-glycosylated.

It localises to the cytoplasm. It is found in the cell membrane. In terms of biological role, involved in regulating cell motility and cell-matrix interactions. May inhibit cell growth through suppression of cell proliferation. In glia, associates and targets CLCN2 at astrocytic processes and myelinated fiber tracts where it may regulate transcellular chloride flux involved in neuron excitability. The sequence is that of Hepatic and glial cell adhesion molecule from Homo sapiens (Human).